Consider the following 126-residue polypeptide: MAFDKDAFLTALDSMSVMELNDLVKAIEEKFGVSAAAMAAPAAGGGAAAGGAAAEEKTEFNVVLAEAGSNKVAVIKAVREITGLGLKEAKDLVDGAPKNVKEGIAKADAEAAVKKLVEAGAKAELK.

The protein belongs to the bacterial ribosomal protein bL12 family. In terms of assembly, homodimer. Part of the ribosomal stalk of the 50S ribosomal subunit. Forms a multimeric L10(L12)X complex, where L10 forms an elongated spine to which 2 to 4 L12 dimers bind in a sequential fashion. Binds GTP-bound translation factors.

Functionally, forms part of the ribosomal stalk which helps the ribosome interact with GTP-bound translation factors. Is thus essential for accurate translation. The chain is Large ribosomal subunit protein bL12 from Paracidovorax citrulli (strain AAC00-1) (Acidovorax citrulli).